The chain runs to 506 residues: MPSLLSTPKLAPVLARLRGLSGCMSCLQRRYSLQPAPVKKIPNRYLGQPSPVTHPHLLRPGEVTPGLSQVEYALRRHKLMALVHKEAQGHSGTDHTVVVLSNPTYYMSNDIPYTFHQDNNFLYLCGFQEPDSILVLQSFSGKQLPSHKAMLFVPRRDPGRELWDGPRSGTDGAIALTGVDEAYPLEEFQHLLPKLRAETNMVWYDWMKPSHAQLHSDYMQPLTEAKARSKNKVRSVQQLIQRLRLVKSPSEIKRMQIAGKLTSEAFIETMFASKAPIDEAFLYAKFEFECRARGADILAYPPVVAGGNRSNTLHYVKNNQLIKDGEMVLLDGGCESSCYVSDITRTWPVNGRFTAPQAELYEAVLEIQRACLTLCSPGTSLENIYSMMLTLIGQKLKDLGITKTSKESAFKAARKYCPHHVGHYLGMDVHDTPDMPRSLPLQPGMVITVEPGIYIPEDDRDAPEKFRGLGVRIEDDVVVTQDSPLILSADCPKEMNDIEQICSRTS.

The transit peptide at 1–31 directs the protein to the mitochondrion; it reads MPSLLSTPKLAPVLARLRGLSGCMSCLQRRY. The segment at 54 to 79 is interaction with TNFRSF1B; that stretch reads HPHLLRPGEVTPGLSQVEYALRRHKL. Substrate is bound by residues Tyr300, Asp331, Asp342, His423, His430, Glu450, and Glu474. Mn(2+) contacts are provided by Asp331, Asp342, and His423. The Mn(2+) site is built by Glu450 and Glu474.

This sequence belongs to the peptidase M24B family. In terms of assembly, homodimer. Interacts with TNFRSF1B/TNFR2 (activated) and TRAF2. The cofactor is Mn(2+). As to expression, expressed in brain, kidney, heart, liver, skeletal muscle and testis.

It localises to the mitochondrion. Its subcellular location is the cytoplasm. The enzyme catalyses Release of any N-terminal amino acid, including proline, that is linked to proline, even from a dipeptide or tripeptide.. In terms of biological role, catalyzes the removal of a penultimate prolyl residue from the N-termini of peptides, such as Leu-Pro-Ala. Also shows low activity towards peptides with Ala or Ser at the P1 position. Promotes TNFRSF1B-mediated phosphorylation of MAPK8/JNK1 and MAPK9/JNK2, suggesting a function as an adapter protein for TNFRSF1B; the effect is independent of XPNPEP3 peptidase activity. May inhibit apoptotic cell death induced via TNF-TNFRSF1B signaling. This Mus musculus (Mouse) protein is Xaa-Pro aminopeptidase 3 (Xpnpep3).